The primary structure comprises 158 residues: MAARSVSGITRRVFMWTVSGTPRREFWSRFRKEKEPVVVETVEEKKEPILACPPLRSRAYTPPEDLQSRLESYVKEFFGSSLPSNWQDISLEDSRLKFNLLAHLADDLGHVVPNSRLHQMCRVRDVLDFYNVPIQDRSKFDELNASNLPPNLKITWSY.

Belongs to the mitochondrion-specific ribosomal protein mL50 family. In terms of assembly, component of the mitochondrial ribosome large subunit (39S) which comprises a 16S rRNA and about 50 distinct proteins.

The protein resides in the mitochondrion. The chain is Large ribosomal subunit protein mL50 (MRPL50) from Pongo abelii (Sumatran orangutan).